Reading from the N-terminus, the 117-residue chain is UPF0342 protein BLi01058/BL02870 (117 aa).

This sequence belongs to the UPF0342 family.

The polypeptide is UPF0342 protein BLi01058/BL02870 (Bacillus licheniformis (strain ATCC 14580 / DSM 13 / JCM 2505 / CCUG 7422 / NBRC 12200 / NCIMB 9375 / NCTC 10341 / NRRL NRS-1264 / Gibson 46)).